The sequence spans 569 residues: Dihydroxy-acid dehydratase (569 aa).

C61 contacts [2Fe-2S] cluster. D93 provides a ligand contact to Mg(2+). C134 provides a ligand contact to [2Fe-2S] cluster. 2 residues coordinate Mg(2+): D135 and K136. K136 is modified (N6-carboxylysine). C211 is a [2Fe-2S] cluster binding site. Residue E462 participates in Mg(2+) binding. S488 functions as the Proton acceptor in the catalytic mechanism.

The protein belongs to the IlvD/Edd family. In terms of assembly, homodimer. [2Fe-2S] cluster serves as cofactor. Requires Mg(2+) as cofactor.

The catalysed reaction is (2R)-2,3-dihydroxy-3-methylbutanoate = 3-methyl-2-oxobutanoate + H2O. It catalyses the reaction (2R,3R)-2,3-dihydroxy-3-methylpentanoate = (S)-3-methyl-2-oxopentanoate + H2O. It participates in amino-acid biosynthesis; L-isoleucine biosynthesis; L-isoleucine from 2-oxobutanoate: step 3/4. Its pathway is amino-acid biosynthesis; L-valine biosynthesis; L-valine from pyruvate: step 3/4. In terms of biological role, functions in the biosynthesis of branched-chain amino acids. Catalyzes the dehydration of (2R,3R)-2,3-dihydroxy-3-methylpentanoate (2,3-dihydroxy-3-methylvalerate) into 2-oxo-3-methylpentanoate (2-oxo-3-methylvalerate) and of (2R)-2,3-dihydroxy-3-methylbutanoate (2,3-dihydroxyisovalerate) into 2-oxo-3-methylbutanoate (2-oxoisovalerate), the penultimate precursor to L-isoleucine and L-valine, respectively. This chain is Dihydroxy-acid dehydratase, found in Tropheryma whipplei (strain Twist) (Whipple's bacillus).